The primary structure comprises 313 residues: MEPNLQFWISERQAFFRRFCQWMDLLDPVNMFISIGSIEKSRQLLFTTEDAPKHYLDNQVIKDAWNKSLSTVHPDSSKLIPHLFRPAAFLPVTAPMVFLLMMPDTGIKSIILTQGCLYGYTTAFNITNGNASYSHGPVERTLLGAGVSVSSTFIGLIPHLFQMKYPPNNFWLKRTLPIVFLAQVSGMNVFASRSFENHRGIEVMDKEGHVVGHSRKAGRKAIKDTAKSRAVLFGTSALAPELFIHIFKRTRFYPQTLLSLVILRMSSTFFMMGLMVPVSFSMFPQIGQIQCSQLEEKIQSSTEEKELFYYRGV.

2 consecutive transmembrane segments (helical) span residues 87-107 and 141-161; these read AAFLPVTAPMVFLLMMPDTGI and TLLGAGVSVSSTFIGLIPHLF. Lys173 carries the post-translational modification N6-acetyllysine. 3 helical membrane passes run 175-191, 230-247, and 269-289; these read TLPIVFLAQVSGMNVFA, AVLFGTSALAPELFIHIF, and FFMMGLMVPVSFSMFPQIGQI.

Belongs to the sideroflexin family. As to expression, largely restricted to kidney, brain and heart.

It localises to the mitochondrion inner membrane. Functionally, mitochondrial amino-acid transporter. Does not act as a serine transporter: not able to mediate transport of serine into mitochondria. The chain is Sideroflexin-4 from Mus musculus (Mouse).